We begin with the raw amino-acid sequence, 548 residues long: tRNA (guanine(26)-N(2))-dimethyltransferase (548 aa).

Positions 30-470 (ASLTEGSAII…APWSFVWDVL (441 aa)) constitute a Trm1 methyltransferase domain. Positions 57, 137, 155, and 186 each coordinate S-adenosyl-L-methionine. Zn(2+) contacts are provided by cysteine 317, cysteine 320, cysteine 354, and cysteine 357. The disordered stretch occupies residues 523–548 (QMNPTENWGPKSKPGKRTIAEVDSKS).

Belongs to the class I-like SAM-binding methyltransferase superfamily. Trm1 family.

Its subcellular location is the mitochondrion. The protein resides in the nucleus. It localises to the cytoplasm. It carries out the reaction guanosine(26) in tRNA + 2 S-adenosyl-L-methionine = N(2)-dimethylguanosine(26) in tRNA + 2 S-adenosyl-L-homocysteine + 2 H(+). In terms of biological role, dimethylates a single guanine residue at position 26 of nuclear- and mitochondrial-encoded tRNAs using S-adenosyl-L-methionine as donor of the methyl groups. Also has tRNA strand annealing and dissociation activity independently of its tRNA guanine-dimethyltransferase activity. This is tRNA (guanine(26)-N(2))-dimethyltransferase from Schizosaccharomyces pombe (strain 972 / ATCC 24843) (Fission yeast).